The following is a 640-amino-acid chain: UvrABC system protein C (640 aa).

Residues 35-113 enclose the GIY-YIG domain; sequence DAPGVYRMIG…IKQLKPRFNV (79 aa). The UVR domain occupies 223-258; it reads RAVMATMAKAMEEAAEELEFERAARLRDRIRALSAV.

This sequence belongs to the UvrC family. As to quaternary structure, interacts with UvrB in an incision complex.

It is found in the cytoplasm. The UvrABC repair system catalyzes the recognition and processing of DNA lesions. UvrC both incises the 5' and 3' sides of the lesion. The N-terminal half is responsible for the 3' incision and the C-terminal half is responsible for the 5' incision. The sequence is that of UvrABC system protein C from Caulobacter vibrioides (strain ATCC 19089 / CIP 103742 / CB 15) (Caulobacter crescentus).